Consider the following 259-residue polypeptide: Protein GrpE (259 aa).

Disordered regions lie at residues 1–75 (MNSD…KGSD) and 227–259 (GPGPKAVNEEIPDQSASNQELSESVDGPTKDEN). Residues 20–40 (NNPSENFVSSSNSNESVNQVE) show a composition bias toward low complexity. Residues 46–60 (EVEHQVKNDSVDTAK) are compositionally biased toward basic and acidic residues. Over residues 61–73 (EQSSTSCESNIKG) the composition is skewed to polar residues.

The protein belongs to the GrpE family. In terms of assembly, homodimer.

The protein localises to the cytoplasm. Functionally, participates actively in the response to hyperosmotic and heat shock by preventing the aggregation of stress-denatured proteins, in association with DnaK and GrpE. It is the nucleotide exchange factor for DnaK and may function as a thermosensor. Unfolded proteins bind initially to DnaJ; upon interaction with the DnaJ-bound protein, DnaK hydrolyzes its bound ATP, resulting in the formation of a stable complex. GrpE releases ADP from DnaK; ATP binding to DnaK triggers the release of the substrate protein, thus completing the reaction cycle. Several rounds of ATP-dependent interactions between DnaJ, DnaK and GrpE are required for fully efficient folding. This Prochlorococcus marinus (strain NATL1A) protein is Protein GrpE.